The primary structure comprises 156 residues: Small ribosomal subunit protein uS7 (156 aa).

This sequence belongs to the universal ribosomal protein uS7 family. In terms of assembly, part of the 30S ribosomal subunit. Contacts proteins S9 and S11.

Functionally, one of the primary rRNA binding proteins, it binds directly to 16S rRNA where it nucleates assembly of the head domain of the 30S subunit. Is located at the subunit interface close to the decoding center, probably blocks exit of the E-site tRNA. The protein is Small ribosomal subunit protein uS7 of Thermosynechococcus vestitus (strain NIES-2133 / IAM M-273 / BP-1).